A 977-amino-acid polypeptide reads, in one-letter code: Disks large-associated protein 3 (977 aa).

A compositionally biased stretch (basic and acidic residues) spans 1 to 10 (MRGYHGDRGS). Disordered regions lie at residues 1 to 24 (MRGY…QHMD), 52 to 96 (AGLG…MYPG), 137 to 167 (FHTL…ESPS), 181 to 289 (AKSH…CLDA), 398 to 417 (AMGD…SPKA), and 529 to 582 (PGSS…SADG). A compositionally biased stretch (low complexity) spans 53 to 73 (GLGHLSPEGPLSLSEGPSSVG). S58 bears the Phosphoserine mark. Gly residues predominate over residues 74 to 87 (PEGGPGGVGAGGGS). Positions 189-201 (PGKRDYNGPKADG) are enriched in basic and acidic residues. Residues 221-245 (SHHHHHHHHHHHHQSRHGKRSKSKD) are compositionally biased toward basic residues. Residues 258–271 (GWWSSDDNLDSDSG) show a composition bias toward low complexity. Residues S404, S407, S410, and S414 each carry the phosphoserine modification. Positions 538 to 547 (APPPIPPGSQ) are enriched in pro residues. A phosphoserine mark is found at S641 and S643. 2 disordered regions span residues 739-788 (EGYP…RTSP) and 906-939 (EEKK…RQRQ). Basic and acidic residues-rich tracts occupy residues 767–777 (GRRDSWMERGS) and 925–939 (PVKE…RQRQ). 3 positions are modified to phosphoserine: S930, S933, and S965.

It belongs to the SAPAP family. Interacts with DLG4/PSD-95. In terms of tissue distribution, highly expressed in central and peripherical nervous system (at protein level).

It localises to the cell membrane. Its subcellular location is the postsynaptic density. The protein localises to the synapse. May play a role in the molecular organization of synapses and neuronal cell signaling. Could be an adapter protein linking ion channel to the subsynaptic cytoskeleton. May induce enrichment of PSD-95/SAP90 at the plasma membrane. The polypeptide is Disks large-associated protein 3 (Dlgap3) (Mus musculus (Mouse)).